Consider the following 559-residue polypeptide: Dihydroxy-acid dehydratase (559 aa).

Residue C49 participates in [2Fe-2S] cluster binding. Residue D81 coordinates Mg(2+). C122 lines the [2Fe-2S] cluster pocket. Residues D123 and K124 each coordinate Mg(2+). At K124 the chain carries N6-carboxylysine. C194 serves as a coordination point for [2Fe-2S] cluster. E446 is a binding site for Mg(2+). S472 (proton acceptor) is an active-site residue.

This sequence belongs to the IlvD/Edd family. As to quaternary structure, homodimer. [2Fe-2S] cluster serves as cofactor. Mg(2+) is required as a cofactor.

It catalyses the reaction (2R)-2,3-dihydroxy-3-methylbutanoate = 3-methyl-2-oxobutanoate + H2O. The enzyme catalyses (2R,3R)-2,3-dihydroxy-3-methylpentanoate = (S)-3-methyl-2-oxopentanoate + H2O. The protein operates within amino-acid biosynthesis; L-isoleucine biosynthesis; L-isoleucine from 2-oxobutanoate: step 3/4. It functions in the pathway amino-acid biosynthesis; L-valine biosynthesis; L-valine from pyruvate: step 3/4. Functionally, functions in the biosynthesis of branched-chain amino acids. Catalyzes the dehydration of (2R,3R)-2,3-dihydroxy-3-methylpentanoate (2,3-dihydroxy-3-methylvalerate) into 2-oxo-3-methylpentanoate (2-oxo-3-methylvalerate) and of (2R)-2,3-dihydroxy-3-methylbutanoate (2,3-dihydroxyisovalerate) into 2-oxo-3-methylbutanoate (2-oxoisovalerate), the penultimate precursor to L-isoleucine and L-valine, respectively. This Prochlorococcus marinus subsp. pastoris (strain CCMP1986 / NIES-2087 / MED4) protein is Dihydroxy-acid dehydratase.